A 248-amino-acid polypeptide reads, in one-letter code: Membrane-spanning 4-domains subfamily A member 6A (248 aa).

The Cytoplasmic segment spans residues 1-46 (MTSQPVPNETIIVLPSNVINFSQAEKPEPTNQGQDSLKKHLHAEIK). The chain crosses the membrane as a helical span at residues 47 to 67 (VIGTIQILCGMMVLSLGIILA). Topologically, residues 68–84 (SASFSPNFTQVTSTLLN) are extracellular. A helical membrane pass occupies residues 85–105 (SAYPFIGPFFFIISGSLSIAT). The Cytoplasmic portion of the chain corresponds to 106-116 (EKRLTKLLVHS). A helical membrane pass occupies residues 117–137 (SLVGSILSALSALVGFIILSV). At 138 to 185 (KQATLNPASLQCELDKNNIPTRSYVSYFYHDSLYTTDCYTAKASLAGT) the chain is on the extracellular side. Residues 186–206 (LSLMLICTLLEFCLAVLTAVL) traverse the membrane as a helical segment. At 207–248 (RWKQAYSDFPGSVLFLPHSYIGNSGMSSKMTHDCGYEELLTS) the chain is on the cytoplasmic side.

Belongs to the MS4A family. In terms of tissue distribution, variable expression in some B-cell, myelomonocytic, and erythroleukemia cell lines.

The protein localises to the membrane. Functionally, may be involved in signal transduction as a component of a multimeric receptor complex. This is Membrane-spanning 4-domains subfamily A member 6A (MS4A6A) from Homo sapiens (Human).